Consider the following 367-residue polypeptide: Quinolinate synthase (367 aa).

Residues His-64 and Ser-82 each coordinate iminosuccinate. Residue Cys-127 coordinates [4Fe-4S] cluster. Residues 153–155 and Ser-170 each bind iminosuccinate; that span reads YVN. Residue Cys-216 coordinates [4Fe-4S] cluster. Residues 242 to 244 and Thr-259 contribute to the iminosuccinate site; that span reads HPE. Position 302 (Cys-302) interacts with [4Fe-4S] cluster.

Belongs to the quinolinate synthase family. Type 2 subfamily. Requires [4Fe-4S] cluster as cofactor.

It localises to the cytoplasm. The enzyme catalyses iminosuccinate + dihydroxyacetone phosphate = quinolinate + phosphate + 2 H2O + H(+). The protein operates within cofactor biosynthesis; NAD(+) biosynthesis; quinolinate from iminoaspartate: step 1/1. Catalyzes the condensation of iminoaspartate with dihydroxyacetone phosphate to form quinolinate. The protein is Quinolinate synthase of Caulobacter vibrioides (strain ATCC 19089 / CIP 103742 / CB 15) (Caulobacter crescentus).